Reading from the N-terminus, the 314-residue chain is tRNA dimethylallyltransferase (314 aa).

An ATP-binding site is contributed by 8-15; sequence GPTGAGKS. 10 to 15 is a binding site for substrate; that stretch reads TGAGKS.

It belongs to the IPP transferase family. In terms of assembly, monomer. Mg(2+) is required as a cofactor.

It carries out the reaction adenosine(37) in tRNA + dimethylallyl diphosphate = N(6)-dimethylallyladenosine(37) in tRNA + diphosphate. In terms of biological role, catalyzes the transfer of a dimethylallyl group onto the adenine at position 37 in tRNAs that read codons beginning with uridine, leading to the formation of N6-(dimethylallyl)adenosine (i(6)A). The chain is tRNA dimethylallyltransferase from Mycobacterium tuberculosis (strain ATCC 25177 / H37Ra).